The chain runs to 108 residues: Protein FMC1 homolog (108 aa).

Belongs to the FMC1 family.

The chain is Protein FMC1 homolog from Caenorhabditis elegans.